The primary structure comprises 43 residues: uncharacterized protein (43 aa).

This is an uncharacterized protein from Bacillus subtilis (strain 168).